Here is a 670-residue protein sequence, read N- to C-terminus: Aurofusarin cluster transcription factor aurR2 (670 aa).

A DNA-binding region (zn(2)-C6 fungal-type) is located at residues 12-38 (CVPCQHRKIRCNGQTPCAYCIRTGKEC). Disordered regions lie at residues 57-76 (RLTAAQTGSPSGDGQVIVSG) and 92-115 (GDEMQGKDVSPDPERPPLRTRTDT). Positions 92 to 113 (GDEMQGKDVSPDPERPPLRTRT) are enriched in basic and acidic residues.

It localises to the nucleus. Functionally, transcription factor that may participate in the regulation of the expression of the gene cluster that mediates the biosynthesis of aurofusarin, a red mycelium pigment which is acting as a mycotoxin. The sequence is that of Aurofusarin cluster transcription factor aurR2 from Gibberella zeae (strain ATCC MYA-4620 / CBS 123657 / FGSC 9075 / NRRL 31084 / PH-1) (Wheat head blight fungus).